The chain runs to 160 residues: Cyclic pyranopterin monophosphate synthase (160 aa).

Substrate is bound by residues 73–75 (LCH) and 110–111 (ME). Residue D125 is part of the active site.

This sequence belongs to the MoaC family. As to quaternary structure, homohexamer; trimer of dimers.

It carries out the reaction (8S)-3',8-cyclo-7,8-dihydroguanosine 5'-triphosphate = cyclic pyranopterin phosphate + diphosphate. Its pathway is cofactor biosynthesis; molybdopterin biosynthesis. In terms of biological role, catalyzes the conversion of (8S)-3',8-cyclo-7,8-dihydroguanosine 5'-triphosphate to cyclic pyranopterin monophosphate (cPMP). The polypeptide is Cyclic pyranopterin monophosphate synthase (Pseudomonas paraeruginosa (strain DSM 24068 / PA7) (Pseudomonas aeruginosa (strain PA7))).